The sequence spans 713 residues: Nucleolin (713 aa).

The segment at 1-309 is disordered; that stretch reads MVKLAKAGKT…QKIEGSEPTT (309 aa). N6-acetyllysine is present on residues Lys-9, Lys-15, and Lys-16. Residues 24–46 show a composition bias toward acidic residues; that stretch reads VEEDSEDEEMSEDEDDSSGEEEV. Ser-28, Ser-34, Ser-40, and Ser-41 each carry phosphoserine. The span at 56–111 shows a compositional bias: low complexity; sequence ATTTPAKKVVVSQTKKAAVPTPAKKAAVTPGKKAAATPAKKAVTPAKVVPTPGKKG. Repeat 1 spans residues 58–65; the sequence is TTPAKKVV. Positions 58–135 are 8 X 8 AA tandem repeats of X-T-P-X-K-K-X-X; it reads TTPAKKVVVS…GAVTPAKGAK (78 aa). Ser-67 carries the phosphoserine modification. Phosphothreonine is present on residues Thr-69, Thr-76, Thr-84, and Thr-92. Repeat copies occupy residues 75 to 82, 83 to 90, and 91 to 98. Lys-96 carries the post-translational modification N6-acetyllysine. Thr-99 carries the phosphothreonine modification. Residues 99 to 104 form a 5; truncated repeat; that stretch reads TPAKVV. Residue Lys-102 is modified to N6-acetyllysine. Copy 6 of the repeat occupies 105-112; that stretch reads PTPGKKGA. Thr-106 carries the phosphothreonine modification. N6-acetyllysine occurs at positions 109 and 116. Repeat copies occupy residues 120–127 and 128–135. Phosphothreonine is present on Thr-121. Lys-124 bears the N6-acetyllysine mark. Phosphoserine is present on residues Ser-145 and Ser-157. The span at 145–168 shows a compositional bias: acidic residues; that stretch reads SDEDEDEEDEDDSDEDEDEEDEFE. A compositionally biased stretch (low complexity) spans 169–186; that stretch reads PPVVKGVKPAKAAPAAPA. 2 positions are modified to phosphoserine: Ser-187 and Ser-213. The segment covering 187 to 218 has biased composition (acidic residues); sequence SEDEDEEDDDDEDDDDDDEEEEEEDDSEEEVM. Thr-221 carries the phosphothreonine modification. Acidic residues predominate over residues 242–275; that stretch reads EEEEDDEDDEDEEEDEDEEDEEDDEDEDEEEEEE. The span at 288–304 shows a compositional bias: basic and acidic residues; it reads MTKQKEAPEAKKQKIEG. Lys-301 is covalently cross-linked (Glycyl lysine isopeptide (Lys-Gly) (interchain with G-Cter in SUMO1); alternate). Lys-301 participates in a covalent cross-link: Glycyl lysine isopeptide (Lys-Gly) (interchain with G-Cter in SUMO2); alternate. A Phosphoserine modification is found at Ser-305. RRM domains follow at residues 311–387 and 397–470; these read FNLF…KPKG and RTLL…YTGE. Lys-322 is subject to N6-acetyllysine. Lys-328 participates in a covalent cross-link: Glycyl lysine isopeptide (Lys-Gly) (interchain with G-Cter in SUMO1); alternate. Residue Lys-328 forms a Glycyl lysine isopeptide (Lys-Gly) (interchain with G-Cter in SUMO2); alternate linkage. Position 352 is an N6-acetyllysine (Lys-352). Ser-360 is subject to Phosphoserine. At Thr-371 the chain carries Phosphothreonine. Lys-374 participates in a covalent cross-link: Glycyl lysine isopeptide (Lys-Gly) (interchain with G-Cter in SUMO2). Lys-381 participates in a covalent cross-link: Glycyl lysine isopeptide (Lys-Gly) (interchain with G-Cter in SUMO2); alternate. At Lys-381 the chain carries N6-acetyllysine; alternate. N6-acetyllysine is present on Lys-402. Phosphoserine is present on Ser-405. Thr-409 carries the post-translational modification Phosphothreonine. An N6-acetyllysine modification is found at Lys-448. Ser-462 and Ser-464 each carry phosphoserine. N6-acetyllysine is present on residues Lys-471 and Lys-480. The RRM 3 domain maps to 489–563; it reads KTLVLSNLSY…RTIRLELQGP (75 aa). Lys-516 participates in a covalent cross-link: Glycyl lysine isopeptide (Lys-Gly) (interchain with G-Cter in SUMO2); alternate. Position 516 is an N6-acetyllysine; alternate (Lys-516). An N6-acetyllysine modification is found at Lys-524. Ser-566 carries the post-translational modification Phosphoserine. Lys-575 carries the N6-acetyllysine modification. The region spanning 575–650 is the RRM 4 domain; that stretch reads KTLFVKGLSE…NKVTLDWAKP (76 aa). Residue Lys-580 forms a Glycyl lysine isopeptide (Lys-Gly) (interchain with G-Cter in SUMO2); alternate linkage. Lys-580 carries the post-translational modification N6-acetyllysine; alternate. The residue at position 583 (Ser-583) is a Phosphoserine. Residue Lys-592 forms a Glycyl lysine isopeptide (Lys-Gly) (interchain with G-Cter in SUMO1); alternate linkage. Residue Lys-592 forms a Glycyl lysine isopeptide (Lys-Gly) (interchain with G-Cter in SUMO2); alternate linkage. Phosphoserine occurs at positions 594 and 622. Lys-627 participates in a covalent cross-link: Glycyl lysine isopeptide (Lys-Gly) (interchain with G-Cter in SUMO2). The interval 645-713 is disordered; that stretch reads LDWAKPKGEG…KPQGKKTKFE (69 aa). An N6-acetyllysine modification is found at Lys-649. A compositionally biased stretch (gly residues) spans 653 to 702; that stretch reads EGGFGGRGGGRGGFGGRGGGRGGRGGFGGRGRGGFGGRGGFRGGRGGGGD. Arg-659, Arg-663, Arg-669, Arg-673, Arg-676, Arg-682, Arg-684, Arg-690, and Arg-694 each carry asymmetric dimethylarginine. Arg-697 bears the Asymmetric dimethylarginine; alternate mark. Arg-697 carries the post-translational modification Omega-N-methylarginine; alternate.

Identified in a IGF2BP1-dependent mRNP granule complex containing untranslated mRNAs. Component of the SWAP complex that consists of NPM1, NCL/nucleolin, PARP1 and SWAP70. Component of a complex which is at least composed of HTATSF1/Tat-SF1, the P-TEFb complex components CDK9 and CCNT1, RNA polymerase II, SUPT5H, and NCL/nucleolin. Interacts with AICDA. Interacts with APTX. Interacts with C1QBP. Interacts with ERBB4. Interacts (via C-terminus) with FMR1 isoform 6 (via N-terminus). Interacts with GZF1; this interaction is important for nucleolar localization of GZF1. Interacts with NSUN2. Interacts with NVL. Interacts (via N-terminus domain) with SETX. Interacts (via RRM1 and C-terminal RRM4/Arg/Gly-rich domains) with TERT; the interaction is important for nucleolar localization of TERT. Interacts with WDR46. Interacts with ZFP36. Interacts with LRRC34. Interacts with RRP1B. Interacts with HNRNPU; this interaction occurs during mitosis. Interacts with RIOK1; RIOK1 recruits NCL to PRMT5 for symmetrically methylation. Interacts with ZBTB7B. Interacts with MDK; this interaction promotes NCL clustering and lateral movements of this complex into lipid rafts leading to MDK internalization. Interacts with HDGF. Interacts with ALKBH2. Interacts with IGFBP5; this interaction is necessary for IGFBP5 localization to the nucleus. Interacts with DDX24 (when ubiquitinated); this interaction may be important during ribosome biogenesis. In terms of processing, some glutamate residues are glycylated by TTLL8. This modification occurs exclusively on glutamate residues and results in a glycine chain on the gamma-carboxyl group. Post-translationally, symmetrically methylated by PRMT5.

The protein resides in the nucleus. It is found in the nucleolus. The protein localises to the cytoplasm. Its function is as follows. Nucleolin is the major nucleolar protein of growing eukaryotic cells. It is found associated with intranucleolar chromatin and pre-ribosomal particles. It induces chromatin decondensation by binding to histone H1. It is thought to play a role in pre-rRNA transcription and ribosome assembly. May play a role in the process of transcriptional elongation. Binds RNA oligonucleotides with 5'-UUAGGG-3' repeats more tightly than the telomeric single-stranded DNA 5'-TTAGGG-3' repeats. The polypeptide is Nucleolin (Ncl) (Rattus norvegicus (Rat)).